Reading from the N-terminus, the 116-residue chain is Protein Rev (116 aa).

Phosphoserine; by host CK2 occurs at positions 5 and 8. The interval 18–26 (LIKFLYQSN) is homomultimerization. Positions 23-48 (YQSNPPPNPEGTRQARRNRRRRWRER) are disordered. The Nuclear localization signal and RNA-binding (RRE) signature appears at 34-50 (TRQARRNRRRRWRERQR). Residues 36–48 (QARRNRRRRWRER) show a composition bias toward basic residues. Positions 73–84 (LQLPPLERLNLD) match the Nuclear export signal and binding to XPO1 motif. Residues 90-116 (GTSGTQGVGSPEILVESPAVLEPGTKE) are disordered. Serine 92 and serine 99 each carry phosphoserine; by host.

The protein belongs to the HIV-1 REV protein family. As to quaternary structure, homomultimer; when bound to the RRE. Multimeric assembly is essential for activity and may involve XPO1. Binds to human KPNB1, XPO1, TNPO1, RANBP5 and IPO7. Interacts with the viral Integrase. Interacts with human KHDRBS1. Interacts with human NAP1; this interaction decreases Rev multimerization and stimulates its activity. Interacts with human DEAD-box helicases DDX3 and DDX24; these interactions may serve for viral RNA export to the cytoplasm and packaging, respectively. Interacts with human PSIP1; this interaction may inhibit HIV-1 DNA integration by promoting dissociation of the Integrase-LEDGF/p75 complex. Asymmetrically arginine dimethylated at one site by host PRMT6. Methylation impairs the RNA-binding activity and export of viral RNA from the nucleus to the cytoplasm. Post-translationally, phosphorylated by protein kinase CK2. Presence of, and maybe binding to the N-terminus of the regulatory beta subunit of CK2 is necessary for CK2-mediated Rev's phosphorylation.

Its subcellular location is the host nucleus. It is found in the host nucleolus. It localises to the host cytoplasm. In terms of biological role, escorts unspliced or incompletely spliced viral pre-mRNAs (late transcripts) out of the nucleus of infected cells. These pre-mRNAs carry a recognition sequence called Rev responsive element (RRE) located in the env gene, that is not present in fully spliced viral mRNAs (early transcripts). This function is essential since most viral proteins are translated from unspliced or partially spliced pre-mRNAs which cannot exit the nucleus by the pathway used by fully processed cellular mRNAs. Rev itself is translated from a fully spliced mRNA that readily exits the nucleus. Rev's nuclear localization signal (NLS) binds directly to KPNB1/Importin beta-1 without previous binding to KPNA1/Importin alpha-1. KPNB1 binds to the GDP bound form of RAN (Ran-GDP) and targets Rev to the nucleus. In the nucleus, the conversion from Ran-GDP to Ran-GTP dissociates Rev from KPNB1 and allows Rev's binding to the RRE in viral pre-mRNAs. Rev multimerization on the RRE via cooperative assembly exposes its nuclear export signal (NES) to the surface. Rev can then form a complex with XPO1/CRM1 and Ran-GTP, leading to nuclear export of the complex. Conversion from Ran-GTP to Ran-GDP mediates dissociation of the Rev/RRE/XPO1/RAN complex, so that Rev can return to the nucleus for a subsequent round of export. Beside KPNB1, also seems to interact with TNPO1/Transportin-1, RANBP5/IPO5 and IPO7/RANBP7 for nuclear import. The nucleoporin-like HRB/RIP is an essential cofactor that probably indirectly interacts with Rev to release HIV RNAs from the perinuclear region to the cytoplasm. This chain is Protein Rev, found in Human immunodeficiency virus type 1 group M subtype B (isolate OYI) (HIV-1).